A 147-amino-acid polypeptide reads, in one-letter code: UPF0208 membrane protein SO_2914 (147 aa).

The next 2 membrane-spanning stretches (helical) occupy residues 40 to 60 (LAILVMPVLAVLASVSQLYTY) and 68 to 88 (ALTIALFFISLPLQGLLWLGW).

This sequence belongs to the UPF0208 family.

The protein localises to the cell inner membrane. This chain is UPF0208 membrane protein SO_2914, found in Shewanella oneidensis (strain ATCC 700550 / JCM 31522 / CIP 106686 / LMG 19005 / NCIMB 14063 / MR-1).